A 182-amino-acid chain; its full sequence is NADH-quinone oxidoreductase subunit I (182 aa).

4Fe-4S ferredoxin-type domains follow at residues 50 to 82 (IILS…LQKA) and 92 to 121 (EFFR…MTPD). Residues cysteine 62, cysteine 65, cysteine 68, cysteine 72, cysteine 101, cysteine 104, cysteine 107, and cysteine 111 each contribute to the [4Fe-4S] cluster site.

It belongs to the complex I 23 kDa subunit family. In terms of assembly, NDH-1 is composed of 14 different subunits. Subunits NuoA, H, J, K, L, M, N constitute the membrane sector of the complex. [4Fe-4S] cluster is required as a cofactor.

The protein localises to the cell inner membrane. The enzyme catalyses a quinone + NADH + 5 H(+)(in) = a quinol + NAD(+) + 4 H(+)(out). NDH-1 shuttles electrons from NADH, via FMN and iron-sulfur (Fe-S) centers, to quinones in the respiratory chain. The immediate electron acceptor for the enzyme in this species is believed to be ubiquinone. Couples the redox reaction to proton translocation (for every two electrons transferred, four hydrogen ions are translocated across the cytoplasmic membrane), and thus conserves the redox energy in a proton gradient. The sequence is that of NADH-quinone oxidoreductase subunit I from Psychrobacter arcticus (strain DSM 17307 / VKM B-2377 / 273-4).